The sequence spans 265 residues: Hydroxyethylthiazole kinase 2 (265 aa).

Met-39 contributes to the substrate binding site. Residues Lys-115 and Thr-168 each contribute to the ATP site. Residue Gly-195 coordinates substrate.

This sequence belongs to the Thz kinase family. Requires Mg(2+) as cofactor.

It catalyses the reaction 5-(2-hydroxyethyl)-4-methylthiazole + ATP = 4-methyl-5-(2-phosphooxyethyl)-thiazole + ADP + H(+). It participates in cofactor biosynthesis; thiamine diphosphate biosynthesis; 4-methyl-5-(2-phosphoethyl)-thiazole from 5-(2-hydroxyethyl)-4-methylthiazole: step 1/1. Its function is as follows. Catalyzes the phosphorylation of the hydroxyl group of 4-methyl-5-beta-hydroxyethylthiazole (THZ). The sequence is that of Hydroxyethylthiazole kinase 2 from Clostridium botulinum (strain Okra / Type B1).